Reading from the N-terminus, the 500-residue chain is Probable malate:quinone oxidoreductase (500 aa).

This sequence belongs to the MQO family. Requires FAD as cofactor.

It carries out the reaction (S)-malate + a quinone = a quinol + oxaloacetate. It participates in carbohydrate metabolism; tricarboxylic acid cycle; oxaloacetate from (S)-malate (quinone route): step 1/1. The polypeptide is Probable malate:quinone oxidoreductase (Bacillus cytotoxicus (strain DSM 22905 / CIP 110041 / 391-98 / NVH 391-98)).